The primary structure comprises 45 residues: Osteocalcin (45 aa).

The Gla domain maps to 1 to 41 (AAGELTLTQLESLREVCEANLACEDMMDAQGIIAAYTAYYG). Glu-11, Glu-15, Glu-18, and Glu-24 together coordinate Ca(2+). 3 positions are modified to 4-carboxyglutamate: Glu-11, Glu-15, and Glu-18. A disulfide bridge connects residues Cys-17 and Cys-23.

Belongs to the osteocalcin/matrix Gla protein family. Gamma-carboxyglutamate residues are formed by vitamin K dependent carboxylation by GGCX. These residues are essential for the binding of calcium. Also found in smaller quantities in dentin.

The protein localises to the secreted. Functionally, the carboxylated form is one of the main organic components of the bone matrix, which constitutes 1-2% of the total bone protein. The carboxylated form binds strongly to apatite and calcium. The sequence is that of Osteocalcin (bglap) from Lepomis macrochirus (Bluegill).